The chain runs to 219 residues: Large ribosomal subunit protein uL3 (219 aa).

The span at 133–145 shows a compositional bias: polar residues; sequence GRASHGNSRSHNV. Residues 133–153 form a disordered region; it reads GRASHGNSRSHNVPGSIGMAQ. N5-methylglutamine is present on Q153.

This sequence belongs to the universal ribosomal protein uL3 family. In terms of assembly, part of the 50S ribosomal subunit. Forms a cluster with proteins L14 and L19. Post-translationally, methylated by PrmB.

Its function is as follows. One of the primary rRNA binding proteins, it binds directly near the 3'-end of the 23S rRNA, where it nucleates assembly of the 50S subunit. The polypeptide is Large ribosomal subunit protein uL3 (Paraburkholderia phymatum (strain DSM 17167 / CIP 108236 / LMG 21445 / STM815) (Burkholderia phymatum)).